A 542-amino-acid polypeptide reads, in one-letter code: Phosphoacetylglucosamine mutase (542 aa).

M1 carries the N-acetylmethionine modification. T62 carries the phosphothreonine modification. Catalysis depends on S64, which acts as the Phosphoserine intermediate. 4 residues coordinate Mg(2+): S64, D276, D278, and D280. Phosphoserine is present on S64. Residues 370 to 372 (EAN), 496 to 500 (RPSGT), and R505 contribute to the substrate site.

This sequence belongs to the phosphohexose mutase family. Mg(2+) is required as a cofactor.

It catalyses the reaction N-acetyl-alpha-D-glucosamine 1-phosphate = N-acetyl-D-glucosamine 6-phosphate. Its pathway is nucleotide-sugar biosynthesis; UDP-N-acetyl-alpha-D-glucosamine biosynthesis; N-acetyl-alpha-D-glucosamine 1-phosphate from alpha-D-glucosamine 6-phosphate (route I): step 2/2. With respect to regulation, inhibited by Mn(2+), Cd(2+), Zn(2+), Cu(2+) and Be(2+). Catalyzes the conversion of GlcNAc-6-P into GlcNAc-1-P during the synthesis of uridine diphosphate/UDP-GlcNAc, a sugar nucleotide critical to multiple glycosylation pathways including protein N- and O-glycosylation. This is Phosphoacetylglucosamine mutase from Sus scrofa (Pig).